The sequence spans 462 residues: O-methyltransferase CTB2 (462 aa).

D289 serves as a coordination point for S-adenosyl-L-methionine. H340 acts as the Proton acceptor in catalysis.

It belongs to the class I-like SAM-binding methyltransferase superfamily. Cation-independent O-methyltransferase family. COMT subfamily.

It functions in the pathway mycotoxin biosynthesis. In terms of biological role, O-methyltransferase; part of the gene cluster that mediates the biosynthesis of cercosporin, a light-activated, non-host-selective toxin. The perylenequinone chromophore of cercosporin absorbs light energy to attain an electronically-activated triplet state and produces active oxygen species such as the hydroxyl radical, superoxide, hydrogen peroxide or singlet oxygen upon reaction with oxygen molecules. These reactive oxygen species cause damage to various cellular components including lipids, proteins and nucleic acids. The first step of cercosporin biosynthesis is performed by the polyketide synthase CTB1 which catalyzes the formation of nor-toralactone. The starter unit acyltransferase (SAT) domain of CTB1 initiates polyketide extension by the selective utilization of acetyl-CoA, which is elongated to the heptaketide in the beta-ketoacyl synthase (KS) domain by successive condensations with six malonyl units introduced by the malonyl acyltransferase (MAT) domain. The product template (PT) domain catalyzes C4-C9 and C2-C11 aldol cyclizations and dehydrations to a trihydroxynaphthalene, which is thought to be delivered to the thioesterase (TE) domain for product release. The bifunctional enzyme CTB3 then methylates nor-toralactone to toralactone before conducting an unusual oxidative aromatic ring opening. The O-methyltransferase CTB2 further methylates the nascent OH-6 of the CBT3 product, blocking further oxidation at this site before the reductase CTB6 reduces the 2-oxopropyl ketone at position C7, giving naphthalene. The FAD-dependent monooxygenase CTB5 in concert with the multicopper oxidase CTB12 are responsible for homodimerization of naphthalene with CTB7 installing the dioxepine moiety, finally producing cercosporin. The fasciclin domain-containing protein CTB11 might act with CTB5 and CTB12 whereas the roles of CTB9 and CTB10 have still to be elucidated. In Cercospora beticola (Sugarbeet leaf spot fungus), this protein is O-methyltransferase CTB2.